The chain runs to 125 residues: Ribosome-binding factor A (125 aa).

It belongs to the RbfA family. As to quaternary structure, monomer. Binds 30S ribosomal subunits, but not 50S ribosomal subunits or 70S ribosomes.

The protein resides in the cytoplasm. Functionally, one of several proteins that assist in the late maturation steps of the functional core of the 30S ribosomal subunit. Associates with free 30S ribosomal subunits (but not with 30S subunits that are part of 70S ribosomes or polysomes). Required for efficient processing of 16S rRNA. May interact with the 5'-terminal helix region of 16S rRNA. This Methylobacillus flagellatus (strain ATCC 51484 / DSM 6875 / VKM B-1610 / KT) protein is Ribosome-binding factor A.